Consider the following 53-residue polypeptide: Sec-independent protein translocase protein TatA (53 aa).

The chain crosses the membrane as a helical span at residues 1-21 (MGMSFSHLLIVLLIIFVLFGA).

It belongs to the TatA/E family. In terms of assembly, the Tat system comprises two distinct complexes: a TatABC complex, containing multiple copies of TatA, TatB and TatC subunits, and a separate TatA complex, containing only TatA subunits. Substrates initially bind to the TatABC complex, which probably triggers association of the separate TatA complex to form the active translocon.

Its subcellular location is the cell inner membrane. In terms of biological role, part of the twin-arginine translocation (Tat) system that transports large folded proteins containing a characteristic twin-arginine motif in their signal peptide across membranes. TatA could form the protein-conducting channel of the Tat system. This chain is Sec-independent protein translocase protein TatA, found in Rickettsia typhi (strain ATCC VR-144 / Wilmington).